We begin with the raw amino-acid sequence, 819 residues long: Endonuclease MutS2 (819 aa).

339-346 (GPNTGGKT) is a binding site for ATP. The 76-residue stretch at 744 to 819 (VDVRGLRVDE…GAGVTVAELA (76 aa)) folds into the Smr domain.

This sequence belongs to the DNA mismatch repair MutS family. MutS2 subfamily. In terms of assembly, homodimer. Binds to stalled ribosomes, contacting rRNA.

In terms of biological role, endonuclease that is involved in the suppression of homologous recombination and thus may have a key role in the control of bacterial genetic diversity. Acts as a ribosome collision sensor, splitting the ribosome into its 2 subunits. Detects stalled/collided 70S ribosomes which it binds and splits by an ATP-hydrolysis driven conformational change. Acts upstream of the ribosome quality control system (RQC), a ribosome-associated complex that mediates the extraction of incompletely synthesized nascent chains from stalled ribosomes and their subsequent degradation. Probably generates substrates for RQC. This Gemmatimonas aurantiaca (strain DSM 14586 / JCM 11422 / NBRC 100505 / T-27) protein is Endonuclease MutS2.